A 431-amino-acid chain; its full sequence is MRILLDNISIIPVSGSNSFIEKGYLLIEDVFIKELGTGKAPEGEFDHIIDGENQVLLPGFINAHTHAAMTLLRGYADDLPLMEWLENKIWPLEAKLTPEDIYWGTMLAIVEMIKSGTTTFNDMYFCMDEVARAVELSGMRAVLARGMVGVGPESEQAIEDSRELIGKWQGQAGGRISFRLGPHAPYTCPPAYLERVMQLSDELQAGIHIHVAETRVEYEDILKQYGKTPVSHLESLGLFQGRQVLAAHCVHLNEEEIGILHQYQVGVAHNPESNMKLASGIAPVPRMLESGIAVALGTDGASSNNNLDMLQEMRSSSFLHKVNTMDPMVLPAYQALEMATANGAISLGMGNELGRLEPGYRADMIIMNLKEAHMTPRYDLLANIVYSAQASDVNSVIIDGKIVMENREIKTFDEQEVLAKARETARKLVGK.

2 residues coordinate Zn(2+): histidine 64 and histidine 66. 3 residues coordinate substrate: glutamate 93, arginine 145, and histidine 183. Position 210 (histidine 210) interacts with Zn(2+). Residues glutamate 213 and aspartate 299 each coordinate substrate. Residue aspartate 299 coordinates Zn(2+).

Belongs to the metallo-dependent hydrolases superfamily. MTA/SAH deaminase family. Zn(2+) is required as a cofactor.

It catalyses the reaction S-adenosyl-L-homocysteine + H2O + H(+) = S-inosyl-L-homocysteine + NH4(+). The catalysed reaction is S-methyl-5'-thioadenosine + H2O + H(+) = S-methyl-5'-thioinosine + NH4(+). In terms of biological role, catalyzes the deamination of 5-methylthioadenosine and S-adenosyl-L-homocysteine into 5-methylthioinosine and S-inosyl-L-homocysteine, respectively. Is also able to deaminate adenosine. This chain is 5-methylthioadenosine/S-adenosylhomocysteine deaminase, found in Syntrophomonas wolfei subsp. wolfei (strain DSM 2245B / Goettingen).